A 773-amino-acid polypeptide reads, in one-letter code: C-Maf-inducing protein (773 aa).

Residues 1–28 form a disordered region; sequence MDVTSSSGGGDPRQIEETKPLLGSDVSG. One can recognise a PH domain in the interval 54 to 163; it reads LLQEGDIQVC…HSLQWKKKIY (110 aa). 4 positions are modified to phosphoserine: serine 349, serine 377, serine 382, and serine 660. LRR repeat units follow at residues 663-686, 687-707, 712-732, and 736-756; these read NLEN…IKLP, SLKQ…RLLS, MLQV…LALS, and SLCS…EDLK.

In terms of assembly, interacts with FLNA.

The protein resides in the nucleus. It is found in the cytoplasm. Functionally, plays a role in T-cell signaling pathway. This chain is C-Maf-inducing protein (Cmip), found in Mus musculus (Mouse).